The following is a 92-amino-acid chain: Small ribosomal subunit protein uS19 (92 aa).

This sequence belongs to the universal ribosomal protein uS19 family.

Protein S19 forms a complex with S13 that binds strongly to the 16S ribosomal RNA. This chain is Small ribosomal subunit protein uS19, found in Rhodopseudomonas palustris (strain BisA53).